A 509-amino-acid chain; its full sequence is MANIINLWNGIVPMVQDVNVASITAFKSMIDETWDKKIEANTCISRKHRNIIHEVIRDFMKAYPKMDENRKSPLGAPMQWLTQYYILKNEYHKTMLAYDDGSLNTKFKTLNIYMITNVGQYILYIVFCIISGKNHDGTPYIYDSEITSNDKNLINDRIKYACKQILHGQLTMALRIRNKFMFIGSPMYLWFNVNGSHVYHEIYDRNVGFHNKEIGRLLYAFMYYLSISGRFLNDLALLKFTYLGESWTFSLSVPEYILYGLGYSVFDTIEKFSNDAILVYIRTNNRNGYDYAEFNKKGIVKVTEDKPDNDKRIHAIRLINYSSDVQHIHFGFRNTLIIDNECTNIQSSAENATDIGHYQDSKINIEDDDIIDDDDDDDDDDDDDDYNPKPTPIPDPHPRPPFPRHDYHKRPKLLPVEEPDPVKKDADRIRLDNHILNTLDHNLNSIGHYCCDTVAVDRLEHHIETLGQYTVILARKINMQTLLFPWPLPTVHQHAIDGSIPPHGRSTIL.

Cysteine 43 and cysteine 342 form a disulfide bridge. The tract at residues 356–421 is disordered; it reads GHYQDSKINI…KLLPVEEPDP (66 aa). Over residues 366–385 the composition is skewed to acidic residues; it reads EDDDIIDDDDDDDDDDDDDD. Positions 389–401 are enriched in pro residues; sequence KPTPIPDPHPRPP.

This sequence belongs to the orthopoxvirus OPG153 protein family. In terms of assembly, interacts with proteins OPG094 and OPG143. Interacts with OPG154. Interacts with OPG152. Interacts with host laminin.

It localises to the virion membrane. In terms of biological role, envelop protein that mediates acid-dependent endocytosis into host cells. Plays an important role in endocytic entry of the virus by acting as an acid-sensitive membrane fusion suppressor. Low pH in host endosomes triggers conformational changes to allow de-repression of viral fusion complex activity and membrane fusion within vesicles. Also plays a role in bridging the mature virion with structural protein OPG152. In Monkeypox virus, this protein is Envelop protein OPG153 (OPG153).